The sequence spans 804 residues: RasGAP-activating-like protein 1 (804 aa).

C2 domains lie at 1–105 (MAKS…DSWI) and 116–231 (VQGE…KGWF). Ca(2+) is bound by residues Asp21, Asp27, Asp74, Asp76, Asp82, Asp149, Asp155, Asp202, Asp204, and Asp210. In terms of domain architecture, Ras-GAP spans 317 to 545 (GLAGRFLDYL…SRVRDFLDRL (229 aa)). The region spanning 565–672 (AIVREGYLLK…WLSALRKASA (108 aa)) is the PH domain. The Btk-type zinc-finger motif lies at 674–710 (NPNKLAACHPGAFRSARWTCCLQAERSAAGCSRTHSA). Zn(2+)-binding residues include His682, Cys693, Cys694, and Cys704.

It depends on Ca(2+) as a cofactor. Highly expressed in thyroid and adrenal medulla, lower expression in brain, spinal cord and trachea. Expressed in melanocytes.

Functionally, probable inhibitory regulator of the Ras-cyclic AMP pathway. Plays a role in dendrite formation by melanocytes. The protein is RasGAP-activating-like protein 1 of Homo sapiens (Human).